Here is a 395-residue protein sequence, read N- to C-terminus: Zinc-regulated GTPase metalloprotein activator 1B (395 aa).

The interval 1-36 (MLPAVGSADEEEDPAEEDCPELVPMETTQSEEEEKS) is disordered. Residues 8 to 20 (ADEEEDPAEEDCP) are compositionally biased toward acidic residues. The psi-PxLVp motif signature appears at 17-24 (EDCPELVP). Residue 49–56 (GYLGAGKT) coordinates GTP. Positions 107, 109, and 110 each coordinate Zn(2+). A CXCC motif motif is present at residues 107–110 (CLCC). GTP-binding positions include 110-114 (CSVKD) and 203-206 (NKTD). One can recognise a CobW C-terminal domain in the interval 274–377 (IVTITFEVPG…ILKQLFIATV (104 aa)).

The protein belongs to the SIMIBI class G3E GTPase family. ZNG1 subfamily.

It localises to the nucleus. The enzyme catalyses GTP + H2O = GDP + phosphate + H(+). Functionally, zinc chaperone that directly transfers zinc cofactor to target metalloproteins, thereby activating them. Catalyzes zinc insertion into the active site of methionine aminopeptidase METAP1, which function to cleave the initiator methionine from polypeptides during or after protein translation. Mechanistically, the N-terminal psi-PxLVp motif binds to the C6H2-type zinc finger of inactive form of METAP1. After formation of the docked complex, zinc is transferred from the CXCC motif in the GTPase domain of ZNG1B to the zinc binding site in the peptidase domain of METAP1 in a process requiring GTP hydrolysis. GTP/GDP exchange is required for release of active METAP1. This is Zinc-regulated GTPase metalloprotein activator 1B from Homo sapiens (Human).